Consider the following 175-residue polypeptide: Cytochrome c-550-like protein (175 aa).

The first 34 residues, 1-34, serve as a signal peptide directing secretion; the sequence is MYQPHFWQRSIGWLCGGLLILLLGWTIAPATALA. Residues cysteine 81, cysteine 84, histidine 85, and cysteine 135 each contribute to the heme c site.

The protein belongs to the cytochrome c family. PsbV subfamily. Requires heme c as cofactor.

The protein localises to the cellular thylakoid membrane. In terms of biological role, probable low-potential cytochrome c, can partially replace cytochrome c-550 (PsbV) function. The protein is Cytochrome c-550-like protein of Thermosynechococcus vestitus (strain NIES-2133 / IAM M-273 / BP-1).